Here is a 369-residue protein sequence, read N- to C-terminus: Anhydro-N-acetylmuramic acid kinase (369 aa).

12 to 19 (GTSMDGVD) contacts ATP.

Belongs to the anhydro-N-acetylmuramic acid kinase family.

It carries out the reaction 1,6-anhydro-N-acetyl-beta-muramate + ATP + H2O = N-acetyl-D-muramate 6-phosphate + ADP + H(+). Its pathway is amino-sugar metabolism; 1,6-anhydro-N-acetylmuramate degradation. It participates in cell wall biogenesis; peptidoglycan recycling. Catalyzes the specific phosphorylation of 1,6-anhydro-N-acetylmuramic acid (anhMurNAc) with the simultaneous cleavage of the 1,6-anhydro ring, generating MurNAc-6-P. Is required for the utilization of anhMurNAc either imported from the medium or derived from its own cell wall murein, and thus plays a role in cell wall recycling. This Shewanella sp. (strain ANA-3) protein is Anhydro-N-acetylmuramic acid kinase.